A 228-amino-acid chain; its full sequence is NAD(P)H-quinone oxidoreductase subunit K, chloroplastic (228 aa).

Positions 43, 44, 108, and 139 each coordinate [4Fe-4S] cluster.

This sequence belongs to the complex I 20 kDa subunit family. As to quaternary structure, NDH is composed of at least 16 different subunits, 5 of which are encoded in the nucleus. It depends on [4Fe-4S] cluster as a cofactor.

It localises to the plastid. The protein localises to the chloroplast thylakoid membrane. It carries out the reaction a plastoquinone + NADH + (n+1) H(+)(in) = a plastoquinol + NAD(+) + n H(+)(out). It catalyses the reaction a plastoquinone + NADPH + (n+1) H(+)(in) = a plastoquinol + NADP(+) + n H(+)(out). NDH shuttles electrons from NAD(P)H:plastoquinone, via FMN and iron-sulfur (Fe-S) centers, to quinones in the photosynthetic chain and possibly in a chloroplast respiratory chain. The immediate electron acceptor for the enzyme in this species is believed to be plastoquinone. Couples the redox reaction to proton translocation, and thus conserves the redox energy in a proton gradient. This chain is NAD(P)H-quinone oxidoreductase subunit K, chloroplastic, found in Ceratophyllum demersum (Rigid hornwort).